Reading from the N-terminus, the 572-residue chain is DNA polymerase (572 aa).

The segment at 1 to 222 (MSRKMFSCDF…LPMDKEIRKA (222 aa)) is 3'-5' exonuclease and strand displacement activities. The tract at residues 56–66 (YFHNLKFDGAF) is interaction with the primer terminal protein. Residues D142 and D166 each contribute to the Mg(2+) site. A DNA-binding; Involved in the formation of a stable complex between TP and phi29 DNA polymerase region spans residues 223-226 (YRGG). An initiation, polymerization and pyrophosphorolytic activities region spans residues 227–572 (FTWLNDKYKE…VLVDSVFTIK (346 aa)). Mg(2+) is bound by residues D246 and V247. 5-methyl-UTP contacts are provided by Y251, K368, and K380. D453 and D455 together coordinate Mg(2+). D455 contacts 5-methyl-UTP.

Belongs to the DNA polymerase type-B family. In terms of assembly, interacts with the primer terminal protein; this interaction allows the initiation of TP-primed DNA replication at both viral DNA ends. Interacts with DNA. The cofactor is Mg(2+).

The enzyme catalyses DNA(n) + a 2'-deoxyribonucleoside 5'-triphosphate = DNA(n+1) + diphosphate. Polymerase responsible for protein-primed viral DNA replication by strand displacement with high processivity and fidelity. To start replication, the DNA polymerase forms a heterodimer with a free primer terminal protein (TP), recognizes the replication origins at both 5' ends of the linear chromosome, and initiates replication using as primer the OH-group of Ser-232 of the TP. This polymerase possesses three enzymatic activities: DNA synthesis (polymerase), primer terminal protein (TP) deoxynucleotidylation, which is the formation of a covalent linkage (phosphoester) between the hydroxyl group of a specific serine residue in TP and 5'-dAMP, a reaction directed by the third T at the 3' end, and 3' to 5' exonuclease activity. Exonuclease activity has a proofreading purpose. Since the polymerase initiates the replication on the third thymine, the TP-dAMP initiation product translocates backwards to recover the template information of the 2 terminal nucleotide (sliding back-mechanism). This is DNA polymerase from Bacillus phage Nf (Bacteriophage Nf).